The chain runs to 266 residues: 3-methyl-2-oxobutanoate hydroxymethyltransferase (266 aa).

Positions 45 and 84 each coordinate Mg(2+). Residues 45–46 (DS), aspartate 84, and lysine 112 contribute to the 3-methyl-2-oxobutanoate site. Mg(2+) is bound at residue glutamate 114. Glutamate 181 functions as the Proton acceptor in the catalytic mechanism.

This sequence belongs to the PanB family. In terms of assembly, homodecamer; pentamer of dimers. Mg(2+) is required as a cofactor.

The protein localises to the cytoplasm. The catalysed reaction is 3-methyl-2-oxobutanoate + (6R)-5,10-methylene-5,6,7,8-tetrahydrofolate + H2O = 2-dehydropantoate + (6S)-5,6,7,8-tetrahydrofolate. It participates in cofactor biosynthesis; (R)-pantothenate biosynthesis; (R)-pantoate from 3-methyl-2-oxobutanoate: step 1/2. Its function is as follows. Catalyzes the reversible reaction in which hydroxymethyl group from 5,10-methylenetetrahydrofolate is transferred onto alpha-ketoisovalerate to form ketopantoate. The protein is 3-methyl-2-oxobutanoate hydroxymethyltransferase of Pseudomonas fluorescens (strain SBW25).